The primary structure comprises 288 residues: MDVTAKYELIGLMAYPIRHSLSPEMQNKALEKAGLSFTYMAFEVDNDSFPGAIEGLKALKMRGTGVSMPNKQLACEYVDELTPAAKLVGAINTIVNDDGYLRGYNTDGTGHIRAIKESGFDIKGKTMVLLGAGGASTAIGAQGAIEGLKEIKLFNRRDEFFDKALAFAQRVNENTDCVVTVTDLADQQAFAEALASADILTNGTKVGMKPLENESLVNDISLLHPGLLVTECVYNPHMTKLLQQAQQAGCKTIDGYGMLLWQGAEQFTLWTGKDFPLEYVKQVMGFGA.

The substrate site is built by lysine 71 and aspartate 107. NAD(+) contacts are provided by residues alanine 132 to alanine 135, asparagine 155 to aspartate 158, lysine 205, cysteine 232 to asparagine 235, and glycine 255.

This sequence belongs to the shikimate dehydrogenase family. Homodimer.

It catalyses the reaction L-quinate + NAD(+) = 3-dehydroquinate + NADH + H(+). The catalysed reaction is L-quinate + NADP(+) = 3-dehydroquinate + NADPH + H(+). It carries out the reaction shikimate + NADP(+) = 3-dehydroshikimate + NADPH + H(+). The enzyme catalyses shikimate + NAD(+) = 3-dehydroshikimate + NADH + H(+). It participates in metabolic intermediate biosynthesis; chorismate biosynthesis; chorismate from D-erythrose 4-phosphate and phosphoenolpyruvate: step 4/7. In terms of biological role, the actual biological function of YdiB remains unclear, nor is it known whether 3-dehydroshikimate or quinate represents the natural substrate. Catalyzes the reversible NAD-dependent reduction of both 3-dehydroshikimate (DHSA) and 3-dehydroquinate to yield shikimate (SA) and quinate, respectively. It can use both NAD or NADP for catalysis, however it has higher catalytic efficiency with NAD. The chain is Quinate/shikimate dehydrogenase from Escherichia coli O17:K52:H18 (strain UMN026 / ExPEC).